The following is a 585-amino-acid chain: Chaperonin CPN60-like 1, mitochondrial (585 aa).

A mitochondrion-targeting transit peptide spans 1–32; it reads MYRLVSNVASKARIARKCTSQIGSRLNSTRNY.

Belongs to the chaperonin (HSP60) family.

It is found in the mitochondrion. In terms of biological role, implicated in mitochondrial protein import and macromolecular assembly. May facilitate the correct folding of imported proteins. May also prevent misfolding and promote the refolding and proper assembly of unfolded polypeptides generated under stress conditions in the mitochondrial matrix. In Arabidopsis thaliana (Mouse-ear cress), this protein is Chaperonin CPN60-like 1, mitochondrial.